Reading from the N-terminus, the 464-residue chain is 3-isopropylmalate dehydratase large subunit (464 aa).

[4Fe-4S] cluster is bound by residues C337, C397, and C400.

It belongs to the aconitase/IPM isomerase family. LeuC type 1 subfamily. As to quaternary structure, heterodimer of LeuC and LeuD. It depends on [4Fe-4S] cluster as a cofactor.

It carries out the reaction (2R,3S)-3-isopropylmalate = (2S)-2-isopropylmalate. It participates in amino-acid biosynthesis; L-leucine biosynthesis; L-leucine from 3-methyl-2-oxobutanoate: step 2/4. Its function is as follows. Catalyzes the isomerization between 2-isopropylmalate and 3-isopropylmalate, via the formation of 2-isopropylmaleate. The chain is 3-isopropylmalate dehydratase large subunit from Bacillus cytotoxicus (strain DSM 22905 / CIP 110041 / 391-98 / NVH 391-98).